We begin with the raw amino-acid sequence, 117 residues long: Prefoldin subunit beta (117 aa).

It belongs to the prefoldin subunit beta family. As to quaternary structure, heterohexamer of two alpha and four beta subunits.

Its subcellular location is the cytoplasm. Molecular chaperone capable of stabilizing a range of proteins. Seems to fulfill an ATP-independent, HSP70-like function in archaeal de novo protein folding. The chain is Prefoldin subunit beta from Thermococcus gammatolerans (strain DSM 15229 / JCM 11827 / EJ3).